Reading from the N-terminus, the 554-residue chain is CTP synthase (554 aa).

The segment at 1–265 (MTPLIFVTGG…DEIVVNQLKL (265 aa)) is amidoligase domain. A CTP-binding site is contributed by serine 13. Serine 13 lines the UTP pocket. 14–19 (SLGKGI) contributes to the ATP binding site. Mg(2+) contacts are provided by aspartate 71 and glutamate 139. Residues 146-148 (DIE), 186-191 (KTKPTQ), and lysine 222 contribute to the CTP site. UTP contacts are provided by residues 186–191 (KTKPTQ) and lysine 222. In terms of domain architecture, Glutamine amidotransferase type-1 spans 292-545 (TIAVVGKYVD…IRAARERKAG (254 aa)). An L-glutamine-binding site is contributed by glycine 353. Cysteine 380 functions as the Nucleophile; for glutamine hydrolysis in the catalytic mechanism. Residues 381–384 (YGMQ), glutamate 404, and arginine 471 each bind L-glutamine. Catalysis depends on residues histidine 518 and glutamate 520.

It belongs to the CTP synthase family. In terms of assembly, homotetramer.

It carries out the reaction UTP + L-glutamine + ATP + H2O = CTP + L-glutamate + ADP + phosphate + 2 H(+). It catalyses the reaction L-glutamine + H2O = L-glutamate + NH4(+). The enzyme catalyses UTP + NH4(+) + ATP = CTP + ADP + phosphate + 2 H(+). Its pathway is pyrimidine metabolism; CTP biosynthesis via de novo pathway; CTP from UDP: step 2/2. Allosterically activated by GTP, when glutamine is the substrate; GTP has no effect on the reaction when ammonia is the substrate. The allosteric effector GTP functions by stabilizing the protein conformation that binds the tetrahedral intermediate(s) formed during glutamine hydrolysis. Inhibited by the product CTP, via allosteric rather than competitive inhibition. Catalyzes the ATP-dependent amination of UTP to CTP with either L-glutamine or ammonia as the source of nitrogen. Regulates intracellular CTP levels through interactions with the four ribonucleotide triphosphates. The chain is CTP synthase from Stenotrophomonas maltophilia (strain K279a).